The chain runs to 346 residues: Biotin synthase (346 aa).

The 219-residue stretch at 38-256 (RQVQVSTLLS…IAVARIMMPT (219 aa)) folds into the Radical SAM core domain. [4Fe-4S] cluster-binding residues include C53, C57, and C60. [2Fe-2S] cluster is bound by residues C97, C128, C188, and R260.

It belongs to the radical SAM superfamily. Biotin synthase family. In terms of assembly, homodimer. The cofactor is [4Fe-4S] cluster. It depends on [2Fe-2S] cluster as a cofactor.

The catalysed reaction is (4R,5S)-dethiobiotin + (sulfur carrier)-SH + 2 reduced [2Fe-2S]-[ferredoxin] + 2 S-adenosyl-L-methionine = (sulfur carrier)-H + biotin + 2 5'-deoxyadenosine + 2 L-methionine + 2 oxidized [2Fe-2S]-[ferredoxin]. It participates in cofactor biosynthesis; biotin biosynthesis; biotin from 7,8-diaminononanoate: step 2/2. In terms of biological role, catalyzes the conversion of dethiobiotin (DTB) to biotin by the insertion of a sulfur atom into dethiobiotin via a radical-based mechanism. This chain is Biotin synthase, found in Pseudescherichia vulneris (Escherichia vulneris).